The sequence spans 585 residues: Cyclic nucleotide-binding domain-containing protein 2 (585 aa).

116-239 contacts a nucleoside 3',5'-cyclic phosphate; sequence SYRNYAEPLQ…DAQYRFEFFR (124 aa).

It is found in the cytoplasm. Its subcellular location is the cytosol. Its function is as follows. Essential for male fertility. Plays an important role in spermatogenesis and regulates sperm motility by controlling the development of the flagellar bending of sperm. This Macaca fascicularis (Crab-eating macaque) protein is Cyclic nucleotide-binding domain-containing protein 2 (CNBD2).